The chain runs to 34 residues: Photosystem II reaction center protein M (34 aa).

Residues 5 to 25 (ILAFIATALFVLIPTAFLIIL) traverse the membrane as a helical segment.

Belongs to the PsbM family. In terms of assembly, PSII is composed of 1 copy each of membrane proteins PsbA, PsbB, PsbC, PsbD, PsbE, PsbF, PsbH, PsbI, PsbJ, PsbK, PsbL, PsbM, PsbT, PsbX, PsbY, PsbZ, Psb30/Ycf12, at least 3 peripheral proteins of the oxygen-evolving complex and a large number of cofactors. It forms dimeric complexes.

It is found in the plastid. The protein resides in the chloroplast thylakoid membrane. Functionally, one of the components of the core complex of photosystem II (PSII). PSII is a light-driven water:plastoquinone oxidoreductase that uses light energy to abstract electrons from H(2)O, generating O(2) and a proton gradient subsequently used for ATP formation. It consists of a core antenna complex that captures photons, and an electron transfer chain that converts photonic excitation into a charge separation. This subunit is found at the monomer-monomer interface. The polypeptide is Photosystem II reaction center protein M (Zygnema circumcarinatum (Green alga)).